Consider the following 38-residue polypeptide: Large ribosomal subunit protein bL36 (38 aa).

This sequence belongs to the bacterial ribosomal protein bL36 family.

The chain is Large ribosomal subunit protein bL36 from Roseiflexus sp. (strain RS-1).